The chain runs to 142 residues: Small ribosomal subunit protein uS12 (142 aa).

The protein belongs to the universal ribosomal protein uS12 family. In terms of assembly, part of the 30S ribosomal subunit.

Functionally, with S4 and S5 plays an important role in translational accuracy. Located at the interface of the 30S and 50S subunits. The sequence is that of Small ribosomal subunit protein uS12 from Methanosarcina mazei (strain ATCC BAA-159 / DSM 3647 / Goe1 / Go1 / JCM 11833 / OCM 88) (Methanosarcina frisia).